The chain runs to 85 residues: Small ribosomal subunit protein bS18A (85 aa).

Belongs to the bacterial ribosomal protein bS18 family. In terms of assembly, part of the 30S ribosomal subunit. Forms a tight heterodimer with protein bS6.

Binds as a heterodimer with protein bS6 to the central domain of the 16S rRNA, where it helps stabilize the platform of the 30S subunit. The polypeptide is Small ribosomal subunit protein bS18A (Mycolicibacterium smegmatis (strain ATCC 700084 / mc(2)155) (Mycobacterium smegmatis)).